Here is a 694-residue protein sequence, read N- to C-terminus: Glycine--tRNA ligase beta subunit (694 aa).

This sequence belongs to the class-II aminoacyl-tRNA synthetase family. Tetramer of two alpha and two beta subunits.

It localises to the cytoplasm. The catalysed reaction is tRNA(Gly) + glycine + ATP = glycyl-tRNA(Gly) + AMP + diphosphate. The sequence is that of Glycine--tRNA ligase beta subunit from Acidithiobacillus ferrooxidans (strain ATCC 23270 / DSM 14882 / CIP 104768 / NCIMB 8455) (Ferrobacillus ferrooxidans (strain ATCC 23270)).